The chain runs to 132 residues: Transcription antitermination protein NusB (132 aa).

This sequence belongs to the NusB family.

In terms of biological role, involved in transcription antitermination. Required for transcription of ribosomal RNA (rRNA) genes. Binds specifically to the boxA antiterminator sequence of the ribosomal RNA (rrn) operons. This is Transcription antitermination protein NusB from Campylobacter jejuni subsp. jejuni serotype O:2 (strain ATCC 700819 / NCTC 11168).